Consider the following 179-residue polypeptide: Large ribosomal subunit protein uL5 (179 aa).

This sequence belongs to the universal ribosomal protein uL5 family. Part of the 50S ribosomal subunit; part of the 5S rRNA/L5/L18/L25 subcomplex. Contacts the 5S rRNA and the P site tRNA. Forms a bridge to the 30S subunit in the 70S ribosome.

Functionally, this is one of the proteins that bind and probably mediate the attachment of the 5S RNA into the large ribosomal subunit, where it forms part of the central protuberance. In the 70S ribosome it contacts protein S13 of the 30S subunit (bridge B1b), connecting the 2 subunits; this bridge is implicated in subunit movement. Contacts the P site tRNA; the 5S rRNA and some of its associated proteins might help stabilize positioning of ribosome-bound tRNAs. The polypeptide is Large ribosomal subunit protein uL5 (Pseudomonas fluorescens (strain ATCC BAA-477 / NRRL B-23932 / Pf-5)).